The following is an 835-amino-acid chain: Ribonucleoside-diphosphate reductase large subunit (835 aa).

Residues 1 to 39 (MPPRAPRPAGAVSPPFPPLAGPPLKARAPRARDSPLTSP) form a disordered region. Substrate contacts are provided by residues Thr262, 277 to 278 (SC), Gly308, 489 to 493 (NLCTE), and 666 to 670 (PTVSS). A disulfide bond links Cys278 and Cys506. Catalysis depends on Asn489, which acts as the Proton acceptor. Cys491 functions as the Cysteine radical intermediate in the catalytic mechanism. Catalysis depends on Glu493, which acts as the Proton acceptor.

This sequence belongs to the ribonucleoside diphosphate reductase large chain family. In terms of assembly, heterotetramer composed of a homodimer of the large subunit (R1) and a homodimer of the small subunit (R2). Larger multisubunit protein complex are also active, composed of (R1)n(R2)n.

The enzyme catalyses a 2'-deoxyribonucleoside 5'-diphosphate + [thioredoxin]-disulfide + H2O = a ribonucleoside 5'-diphosphate + [thioredoxin]-dithiol. Its function is as follows. Ribonucleoside-diphosphate reductase holoenzyme provides the precursors necessary for viral DNA synthesis. Allows virus growth in non-dividing cells, as well as reactivation from latency in infected hosts. Catalyzes the biosynthesis of deoxyribonucleotides from the corresponding ribonucleotides. In Suid herpesvirus 1 (strain Kaplan) (SuHV-1), this protein is Ribonucleoside-diphosphate reductase large subunit.